Consider the following 390-residue polypeptide: MSALLDRLRTDLSALAGQGLRRVRRSNALPCAPRALVDGREMLAFCSNDYLGLAAEPALATALAQASSRWGAGSGASHLVSGHYAVHDALEHRLAAFVGAERALYFSTGYMANAGIVPALVGRGDAVFADRLNHASLVDGVLLSRADMHRYPHGDLAVLARQLAGSSAARKLIVTDAVFSMDGDVAPLADLLELAERHDAWLMVDDAHGFGVLGPQGRGALADAGLQHWRLIYVGTLGKAAGVSGAFAAGHGELVEWLLQKARTYIFTTGAPPALAEALLLSLDLIEAADDRRTHLAGLIERFGAELTLSRWQRLPSRTPIQPIRIGGNEEALAVARALWDEGLWVPAIRPPTVPAGSARLRVSLTAAHTEADVLRLARTLNRLEHAAHG.

Arg-22 is a substrate binding site. 109 to 110 contacts pyridoxal 5'-phosphate; it reads GY. A substrate-binding site is contributed by His-134. Pyridoxal 5'-phosphate contacts are provided by Ser-180, His-208, and Thr-236. N6-(pyridoxal phosphate)lysine is present on Lys-239. Residue Thr-353 coordinates substrate.

This sequence belongs to the class-II pyridoxal-phosphate-dependent aminotransferase family. BioF subfamily. As to quaternary structure, homodimer. Requires pyridoxal 5'-phosphate as cofactor.

The enzyme catalyses 6-carboxyhexanoyl-[ACP] + L-alanine + H(+) = (8S)-8-amino-7-oxononanoate + holo-[ACP] + CO2. Its pathway is cofactor biosynthesis; biotin biosynthesis. Catalyzes the decarboxylative condensation of pimeloyl-[acyl-carrier protein] and L-alanine to produce 8-amino-7-oxononanoate (AON), [acyl-carrier protein], and carbon dioxide. The sequence is that of 8-amino-7-oxononanoate synthase from Azoarcus sp. (strain BH72).